A 237-amino-acid polypeptide reads, in one-letter code: Phosphoribosylaminoimidazole-succinocarboxamide synthase (237 aa).

This sequence belongs to the SAICAR synthetase family.

The catalysed reaction is 5-amino-1-(5-phospho-D-ribosyl)imidazole-4-carboxylate + L-aspartate + ATP = (2S)-2-[5-amino-1-(5-phospho-beta-D-ribosyl)imidazole-4-carboxamido]succinate + ADP + phosphate + 2 H(+). It participates in purine metabolism; IMP biosynthesis via de novo pathway; 5-amino-1-(5-phospho-D-ribosyl)imidazole-4-carboxamide from 5-amino-1-(5-phospho-D-ribosyl)imidazole-4-carboxylate: step 1/2. The chain is Phosphoribosylaminoimidazole-succinocarboxamide synthase from Listeria innocua serovar 6a (strain ATCC BAA-680 / CLIP 11262).